The chain runs to 361 residues: Phosphoserine aminotransferase (361 aa).

R43 lines the L-glutamate pocket. Pyridoxal 5'-phosphate is bound by residues A77–S78, W103, T153, D173, and Q196. At K197 the chain carries N6-(pyridoxal phosphate)lysine. N238–T239 is a pyridoxal 5'-phosphate binding site.

It belongs to the class-V pyridoxal-phosphate-dependent aminotransferase family. SerC subfamily. Homodimer. It depends on pyridoxal 5'-phosphate as a cofactor.

Its subcellular location is the cytoplasm. It carries out the reaction O-phospho-L-serine + 2-oxoglutarate = 3-phosphooxypyruvate + L-glutamate. The catalysed reaction is 4-(phosphooxy)-L-threonine + 2-oxoglutarate = (R)-3-hydroxy-2-oxo-4-phosphooxybutanoate + L-glutamate. It participates in amino-acid biosynthesis; L-serine biosynthesis; L-serine from 3-phospho-D-glycerate: step 2/3. Its pathway is cofactor biosynthesis; pyridoxine 5'-phosphate biosynthesis; pyridoxine 5'-phosphate from D-erythrose 4-phosphate: step 3/5. Its function is as follows. Catalyzes the reversible conversion of 3-phosphohydroxypyruvate to phosphoserine and of 3-hydroxy-2-oxo-4-phosphonooxybutanoate to phosphohydroxythreonine. This chain is Phosphoserine aminotransferase, found in Azotobacter vinelandii (strain DJ / ATCC BAA-1303).